Here is a 272-residue protein sequence, read N- to C-terminus: Protein alcS (272 aa).

Residues 1–14 (MDTEQGLKNHTAKT) are compositionally biased toward polar residues. The disordered stretch occupies residues 1-21 (MDTEQGLKNHTAKTSPHDETA). The next 6 membrane-spanning stretches (helical) occupy residues 63 to 83 (PLAL…LMGW), 91 to 111 (IAFT…TSIL), 122 to 144 (VVFG…AFNA), 164 to 184 (FLNT…IFLA), 192 to 212 (VYVA…GAYW), and 225 to 245 (LVVA…YLLV).

It belongs to the acetate uptake transporter (AceTr) (TC 2.A.96) family.

Its subcellular location is the cell membrane. It is found in the cell septum. This is Protein alcS from Aspergillus fumigatus (strain CBS 144.89 / FGSC A1163 / CEA10) (Neosartorya fumigata).